Consider the following 238-residue polypeptide: MQFDPPLQPAILLKRYKRFLADVVTPDGRELTLHCPNTGAMTGCAAPGDTVWYSTSDNAKRKYAHTWELTETQQGAVICVNTLRANSLAKEAISAGIIPELSGYNQLKSEVKYGEENSRIDIMLQADDRQNCYIEVKSVTLAEKEYGYFPDAVTTRGQKHLRELMAVAANGDRAVILFAVLHSAIDRFSPAHHIDARYAQLLTEAQDKGVEILAWKAELSTTRMTLNKPIAVVLNPGK.

The protein belongs to the SfsA family.

In Klebsiella pneumoniae subsp. pneumoniae (strain ATCC 700721 / MGH 78578), this protein is Sugar fermentation stimulation protein homolog.